Here is a 457-residue protein sequence, read N- to C-terminus: ATP-dependent protease ATPase subunit HslU (457 aa).

ATP is bound by residues Val21, 63–68, Asp269, Glu335, and Arg407; that span reads GVGKTE.

It belongs to the ClpX chaperone family. HslU subfamily. In terms of assembly, a double ring-shaped homohexamer of HslV is capped on each side by a ring-shaped HslU homohexamer. The assembly of the HslU/HslV complex is dependent on binding of ATP.

It is found in the cytoplasm. ATPase subunit of a proteasome-like degradation complex; this subunit has chaperone activity. The binding of ATP and its subsequent hydrolysis by HslU are essential for unfolding of protein substrates subsequently hydrolyzed by HslV. HslU recognizes the N-terminal part of its protein substrates and unfolds these before they are guided to HslV for hydrolysis. The polypeptide is ATP-dependent protease ATPase subunit HslU (Desulfotalea psychrophila (strain LSv54 / DSM 12343)).